Consider the following 231-residue polypeptide: Large ribosomal subunit protein uL1 (231 aa).

It belongs to the universal ribosomal protein uL1 family. Part of the 50S ribosomal subunit.

Functionally, binds directly to 23S rRNA. The L1 stalk is quite mobile in the ribosome, and is involved in E site tRNA release. In terms of biological role, protein L1 is also a translational repressor protein, it controls the translation of the L11 operon by binding to its mRNA. The polypeptide is Large ribosomal subunit protein uL1 (Cupriavidus pinatubonensis (strain JMP 134 / LMG 1197) (Cupriavidus necator (strain JMP 134))).